The primary structure comprises 531 residues: NAD(P)H-quinone oxidoreductase chain 4 (531 aa).

A run of 14 helical transmembrane segments spans residues phenylalanine 9–phenylalanine 29, phenylalanine 41–phenylalanine 61, methionine 93–valine 113, proline 117–valine 137, leucine 141–tryptophan 161, phenylalanine 173–phenylalanine 193, isoleucine 217–histidine 237, threonine 248–leucine 268, phenylalanine 282–phenylalanine 302, isoleucine 311–serine 331, alanine 337–alanine 357, phenylalanine 381–valine 401, valine 422–methionine 442, and valine 469–valine 489.

The protein belongs to the complex I subunit 4 family.

It is found in the cellular thylakoid membrane. It catalyses the reaction a plastoquinone + NADH + (n+1) H(+)(in) = a plastoquinol + NAD(+) + n H(+)(out). It carries out the reaction a plastoquinone + NADPH + (n+1) H(+)(in) = a plastoquinol + NADP(+) + n H(+)(out). Functionally, NDH-1 shuttles electrons from NAD(P)H, via FMN and iron-sulfur (Fe-S) centers, to quinones in the respiratory chain. The immediate electron acceptor for the enzyme in this species is believed to be plastoquinone. Couples the redox reaction to proton translocation (for every two electrons transferred, four hydrogen ions are translocated across the cytoplasmic membrane), and thus conserves the redox energy in a proton gradient. This chain is NAD(P)H-quinone oxidoreductase chain 4, found in Prochlorococcus marinus (strain MIT 9301).